The primary structure comprises 513 residues: Nitrate transporter 2.2 (513 aa).

The next 12 membrane-spanning stretches (helical) occupy residues 38-58 (WICF…APVI), 74-94 (VSAV…VDVV), 98-118 (YGAA…ALVT), 128-148 (FFIG…GTMF), 158-178 (AIAA…MPLI), 196-216 (AFFV…LLGI), 247-265 (LGNY…SFGV), 281-301 (FGLN…MNIF), 323-343 (LWVL…MGKV), 351-371 (IVIM…HFGI), 383-403 (VSGL…AIWF), and 419-439 (FVWM…IWFP).

This sequence belongs to the major facilitator superfamily. Nitrate/nitrite porter (TC 2.A.1.8) family.

The protein resides in the cell membrane. In terms of biological role, involved in nitrate transport, but does not seem to be able to mediate transport by its own. Acts as a dual component transporter with NAR2 (system 2). Involved in a high affinity transport specific for nitrate. This chain is Nitrate transporter 2.2, found in Chlamydomonas reinhardtii (Chlamydomonas smithii).